A 389-amino-acid polypeptide reads, in one-letter code: ELAV-like protein 2 (389 aa).

RRM domains are found at residues 66-145 (TNLI…YARP), 153-233 (ANLY…FANN), and 306-384 (WCIF…FKTS).

This sequence belongs to the RRM elav family. As to quaternary structure, part of a ribonucleoprotein (RNP) complex, at least composed of elavl1/elrA and/or elavl2/elrB, igf2bp3/vg1RBP, ddx6/Xp54, ybx2/frgy2, lsm14b/rap55b and, in a subset of RNP complexes, stau1/staufen. Binds RNA as a homooligomer. In terms of tissue distribution, expressed in brain, testis and ovary. Ovarian expression is restricted to follicle cells surrounding the oocyte. From the early tailbud stage, expression is neural-specific and is seen in both the central and peripheral nervous system in differentiating neurons but not proliferating precursors. Expressed in the retina from stage 32 with expression becoming restricted to the ganglion cell layer by later stages.

It is found in the cytoplasm. Its subcellular location is the cell cortex. Functionally, binds to poly-U elements and AU-rich elements (AREs) in the 3'-UTR of target mRNAs. Required for the vegetal localization of vg1 mRNA. Probably required for nervous system development. The sequence is that of ELAV-like protein 2 (elavl2) from Xenopus laevis (African clawed frog).